Reading from the N-terminus, the 251-residue chain is Methionine aminopeptidase (251 aa).

His-77 contributes to the substrate binding site. A divalent metal cation contacts are provided by Asp-94, Asp-105, and His-169. His-176 lines the substrate pocket. Positions 202 and 233 each coordinate a divalent metal cation.

The protein belongs to the peptidase M24A family. Methionine aminopeptidase type 1 subfamily. Monomer. It depends on Co(2+) as a cofactor. Zn(2+) serves as cofactor. Requires Mn(2+) as cofactor. Fe(2+) is required as a cofactor.

The catalysed reaction is Release of N-terminal amino acids, preferentially methionine, from peptides and arylamides.. Removes the N-terminal methionine from nascent proteins. The N-terminal methionine is often cleaved when the second residue in the primary sequence is small and uncharged (Met-Ala-, Cys, Gly, Pro, Ser, Thr, or Val). Requires deformylation of the N(alpha)-formylated initiator methionine before it can be hydrolyzed. This Mycoplasma capricolum subsp. capricolum (strain California kid / ATCC 27343 / NCTC 10154) protein is Methionine aminopeptidase.